Consider the following 400-residue polypeptide: Aspartate/prephenate aminotransferase (400 aa).

Residues G39, W125, and N175 each contribute to the L-aspartate site. N6-(pyridoxal phosphate)lysine is present on K239. L-aspartate is bound at residue R375.

This sequence belongs to the class-I pyridoxal-phosphate-dependent aminotransferase family. In terms of assembly, homodimer. Pyridoxal 5'-phosphate serves as cofactor.

The protein resides in the cytoplasm. The catalysed reaction is L-aspartate + 2-oxoglutarate = oxaloacetate + L-glutamate. It carries out the reaction L-arogenate + 2-oxoglutarate = prephenate + L-glutamate. Catalyzes the reversible conversion of aspartate and 2-oxoglutarate to glutamate and oxaloacetate. Can also transaminate prephenate in the presence of glutamate. Required for symbiotic nitrogen fixation. This chain is Aspartate/prephenate aminotransferase, found in Rhizobium meliloti (strain 1021) (Ensifer meliloti).